Reading from the N-terminus, the 1575-residue chain is Ras GTPase-activating-like protein IQGAP2 (1575 aa).

At S16 the chain carries Phosphoserine. A Calponin-homology (CH) domain is found at 41-156 (LCHLEEAKRW…YCIHALSLYL (116 aa)). The residue at position 356 (T356) is a Phosphothreonine. Positions 594-627 (ESSEGSWVTLNVQEKYNYYYNTDSKEGSWVPPEL) constitute a WW domain. Phosphoserine is present on residues S595 and S599. 3 IQ domains span residues 690–719 (QTES…VFAG), 720–749 (NVDS…YFED), and 750–779 (HKNE…SENP). Phosphothreonine is present on residues T782, T881, T1002, and T1269. The Ras-GAP domain maps to 933–1182 (YLLLKLFKTA…QEFRKYFQEA (250 aa)). S1279 and S1461 each carry phosphoserine.

In terms of biological role, binds to activated CDC42 and RAC1 but does not seem to stimulate their GTPase activity. Associates with calmodulin. The sequence is that of Ras GTPase-activating-like protein IQGAP2 (Iqgap2) from Mus musculus (Mouse).